The primary structure comprises 181 residues: Transcription termination/antitermination protein NusG (181 aa).

In terms of domain architecture, KOW spans Pro130–Ser161.

Belongs to the NusG family. As to quaternary structure, monomer. Interacts with the transcription termination factor Rho and with RNA polymerase.

Participates in transcription elongation, termination and antitermination. In the absence of Rho, increases the rate of transcription elongation by the RNA polymerase (RNAP), probably by partially suppressing pausing. In the presence of Rho, modulates most Rho-dependent termination events by interacting with the RNAP to render the complex more susceptible to the termination activity of Rho. May be required to overcome a kinetic limitation of Rho to function at certain terminators. Also involved in ribosomal RNA transcriptional antitermination. The sequence is that of Transcription termination/antitermination protein NusG from Shigella flexneri.